The sequence spans 106 residues: U1-lycotoxin-Ls1b (106 aa).

A signal peptide spans 1–19 (MKVLVVVALLVTLISYSSS). Positions 20–40 (EGIDDPEADELLSLMANEQTR) are excised as a propeptide. Cystine bridges form between C43–C58, C50–C67, C57–C85, and C69–C83.

It belongs to the neurotoxin 19 (CSTX) family. 04 (U1-Lctx) subfamily. In terms of tissue distribution, expressed by the venom gland.

The protein resides in the secreted. The protein is U1-lycotoxin-Ls1b of Lycosa singoriensis (Wolf spider).